Consider the following 285-residue polypeptide: Bifunctional protein FolD (285 aa).

Residues 165–167 and S190 each bind NADP(+); that span reads GRS.

The protein belongs to the tetrahydrofolate dehydrogenase/cyclohydrolase family. Homodimer.

It catalyses the reaction (6R)-5,10-methylene-5,6,7,8-tetrahydrofolate + NADP(+) = (6R)-5,10-methenyltetrahydrofolate + NADPH. The catalysed reaction is (6R)-5,10-methenyltetrahydrofolate + H2O = (6R)-10-formyltetrahydrofolate + H(+). The protein operates within one-carbon metabolism; tetrahydrofolate interconversion. In terms of biological role, catalyzes the oxidation of 5,10-methylenetetrahydrofolate to 5,10-methenyltetrahydrofolate and then the hydrolysis of 5,10-methenyltetrahydrofolate to 10-formyltetrahydrofolate. This chain is Bifunctional protein FolD, found in Burkholderia multivorans (strain ATCC 17616 / 249).